The sequence spans 279 residues: Virginiamycin B lyase (279 aa).

Substrate is bound at residue His-215. Residue Glu-253 participates in Mg(2+) binding. Residue His-255 is the Proton acceptor of the active site. A Mg(2+)-binding site is contributed by Glu-270.

It belongs to the Vgb family. Monomer. It depends on Mg(2+) as a cofactor.

Functionally, inactivates the type B streptogramin antibiotics by linearizing the lactone ring at the ester linkage, generating a free phenylglycine carboxylate and converting the threonyl moiety into 2-amino-butenoic acid. The sequence is that of Virginiamycin B lyase from Nocardia farcinica (strain IFM 10152).